Reading from the N-terminus, the 311-residue chain is Coproporphyrin III ferrochelatase 1 (311 aa).

Fe-coproporphyrin III is bound by residues Tyr-12, Arg-29, 45-46 (RY), Ser-53, and Tyr-124. Residues His-182 and Glu-263 each coordinate Fe(2+).

The protein belongs to the ferrochelatase family.

The protein resides in the cytoplasm. It carries out the reaction Fe-coproporphyrin III + 2 H(+) = coproporphyrin III + Fe(2+). It participates in porphyrin-containing compound metabolism; protoheme biosynthesis. Functionally, involved in coproporphyrin-dependent heme b biosynthesis. Catalyzes the insertion of ferrous iron into coproporphyrin III to form Fe-coproporphyrin III. The protein is Coproporphyrin III ferrochelatase 1 of Bacillus cereus (strain ATCC 14579 / DSM 31 / CCUG 7414 / JCM 2152 / NBRC 15305 / NCIMB 9373 / NCTC 2599 / NRRL B-3711).